The following is an 841-amino-acid chain: Probable outer membrane usher protein EcpC (841 aa).

Positions 1–29 are cleaved as a signal peptide; the sequence is MPLRRFSPGLKAQFAFGMVFLFVQPDASA.

Belongs to the EcpC/MatD family.

In terms of biological role, part of the ecpRABCDE operon, which encodes the E.coli common pilus (ECP). ECP is found in both commensal and pathogenic strains and plays a dual role in early-stage biofilm development and host cell recognition. This chain is Probable outer membrane usher protein EcpC (ecpC), found in Escherichia coli O6:H1 (strain CFT073 / ATCC 700928 / UPEC).